A 388-amino-acid polypeptide reads, in one-letter code: Alpha-2B adrenergic receptor (388 aa).

The chain crosses the membrane as a helical span at residues 1–25 (AIAAVITFLILFTIFGNALVILAVL). Over 26–36 (TSRSLRAPQNL) the chain is Cytoplasmic. A helical transmembrane segment spans residues 37-62 (FLVSLAAADILVATLIIPFSLANELL). Topologically, residues 63–72 (GYWYFRRTWC) are extracellular. Residues cysteine 72 and cysteine 151 are joined by a disulfide bond. A helical membrane pass occupies residues 73-95 (EVYLALDVLFCTSSIVHLCAISL). Residues 96 to 117 (DRYWAVSRALEYNSKRTPRXIK) are Cytoplasmic-facing. A helical membrane pass occupies residues 118-140 (CIILTVWLIAAAISLPPLIYKGD). At 141 to 156 (QGPQPRGRPQCKLNQE) the chain is on the extracellular side. The chain crosses the membrane as a helical span at residues 157–180 (AWYILSSSIGSFFAPCLIMILVYL). Over 181–352 (RIYVIAKRSN…LTREKRFTFV (172 aa)) the chain is Cytoplasmic. The segment at 193–309 (GPRAKGASRE…ASACNPPLQQ (117 aa)) is disordered. Residues 239 to 249 (PTGEKEGKTPE) are compositionally biased toward basic and acidic residues. Acidic residues predominate over residues 279–291 (PEEEAEEEEEECE). Positions 292-302 (PQAAPASSASA) are enriched in low complexity. The helical transmembrane segment at 353-376 (LAVVIGVFVLCWFPFFFSYSLGAI) threads the bilayer. Topologically, residues 377 to 385 (CPQRCKVPH) are extracellular. The helical transmembrane segment at 386-388 (GLF) threads the bilayer.

The protein belongs to the G-protein coupled receptor 1 family. Adrenergic receptor subfamily. ADRA2B sub-subfamily. In terms of assembly, interacts with RAB26. Interacts with PPP1R9B.

The protein resides in the cell membrane. Its function is as follows. Alpha-2 adrenergic receptors mediate the catecholamine-induced inhibition of adenylate cyclase through the action of G proteins. The chain is Alpha-2B adrenergic receptor (ADRA2B) from Orycteropus afer (Aardvark).